We begin with the raw amino-acid sequence, 217 residues long: Adapter protein MecA (217 aa).

Belongs to the MecA family. As to quaternary structure, homodimer.

In terms of biological role, enables the recognition and targeting of unfolded and aggregated proteins to the ClpC protease or to other proteins involved in proteolysis. This is Adapter protein MecA from Listeria innocua serovar 6a (strain ATCC BAA-680 / CLIP 11262).